We begin with the raw amino-acid sequence, 519 residues long: Chaperone SurA (519 aa).

The N-terminal stretch at 1–31 (MMRSLHSLRRMSGTVLALMLAAGLPLSAAQA) is a signal peptide. 2 stretches are compositionally biased toward low complexity: residues 31–45 (AQPAKPAPKGDQKPA) and 197–207 (PAAAQATRAPA). Disordered regions lie at residues 31–50 (AQPAKPAPKGDQKPATPAPS) and 196–221 (NPAAAQATRAPAPQQPQPQPRQPAQS). Positions 223-324 (PAMLVLAQIL…NGFHILKVVD (102 aa)) constitute a PpiC 1 domain. Residues 328 to 361 (GGQPAQAARPAPAPAPQQPSSFQEGPSVAAPQGP) are disordered. The region spanning 364–463 (VTQTHARHIL…FGWHLIQVLE (100 aa)) is the PpiC 2 domain.

The protein resides in the periplasm. The catalysed reaction is [protein]-peptidylproline (omega=180) = [protein]-peptidylproline (omega=0). In terms of biological role, chaperone involved in the correct folding and assembly of outer membrane proteins. Recognizes specific patterns of aromatic residues and the orientation of their side chains, which are found more frequently in integral outer membrane proteins. May act in both early periplasmic and late outer membrane-associated steps of protein maturation. The chain is Chaperone SurA from Bordetella parapertussis (strain 12822 / ATCC BAA-587 / NCTC 13253).